A 353-amino-acid polypeptide reads, in one-letter code: Protein RecA (353 aa).

Position 67 to 74 (67 to 74 (GPESSGKT)) interacts with ATP. Residues 330-353 (SNPNSTPDFSVDDSEGVAETNEDF) are disordered. Over residues 339 to 353 (SVDDSEGVAETNEDF) the composition is skewed to acidic residues.

This sequence belongs to the RecA family.

The protein localises to the cytoplasm. Can catalyze the hydrolysis of ATP in the presence of single-stranded DNA, the ATP-dependent uptake of single-stranded DNA by duplex DNA, and the ATP-dependent hybridization of homologous single-stranded DNAs. It interacts with LexA causing its activation and leading to its autocatalytic cleavage. This chain is Protein RecA, found in Escherichia coli O157:H7 (strain EC4115 / EHEC).